Reading from the N-terminus, the 308-residue chain is Glucan 1,3-beta-glucosidase ARB_02797 (308 aa).

Positions 1–20 (MRFSTALSLALAVSPAAVFA) are cleaved as a signal peptide. E120 serves as the catalytic Proton donor. N126 carries N-linked (GlcNAc...) asparagine glycosylation. E220 acts as the Nucleophile in catalysis.

Belongs to the glycosyl hydrolase 17 family.

It is found in the secreted. The protein resides in the cell wall. It localises to the cytoplasm. The catalysed reaction is Successive hydrolysis of beta-D-glucose units from the non-reducing ends of (1-&gt;3)-beta-D-glucans, releasing alpha-glucose.. In terms of biological role, cell wall glucan 1,3-beta-glucosidase involved in cell wall biosynthesis and virulence. Crucial for delivery of beta-1,3-glucan to the biofilm matrix and for accumulation of mature matrix biomass. The chain is Glucan 1,3-beta-glucosidase ARB_02797 from Arthroderma benhamiae (strain ATCC MYA-4681 / CBS 112371) (Trichophyton mentagrophytes).